The primary structure comprises 393 residues: Acetate kinase (393 aa).

Asn6 contacts Mg(2+). Lys13 contributes to the ATP binding site. Position 87 (Arg87) interacts with substrate. Asp143 serves as the catalytic Proton donor/acceptor. ATP contacts are provided by residues 203–207 (HLGNG), 278–280 (DMR), and 326–330 (GIGEN). Residue Glu380 coordinates Mg(2+).

It belongs to the acetokinase family. In terms of assembly, homodimer. Requires Mg(2+) as cofactor. Mn(2+) is required as a cofactor.

The protein localises to the cytoplasm. The enzyme catalyses acetate + ATP = acetyl phosphate + ADP. It participates in metabolic intermediate biosynthesis; acetyl-CoA biosynthesis; acetyl-CoA from acetate: step 1/2. Its function is as follows. Catalyzes the formation of acetyl phosphate from acetate and ATP. Can also catalyze the reverse reaction. In Mycoplasma capricolum subsp. capricolum (strain California kid / ATCC 27343 / NCTC 10154), this protein is Acetate kinase.